Reading from the N-terminus, the 654-residue chain is NADPH-dependent diflavin oxidoreductase 1 (654 aa).

Residues 1-10 (MSGSQSSGSP) are compositionally biased toward low complexity. Residues 1-22 (MSGSQSSGSPGSPGPPGPPGRS) form a disordered region. The 145-residue stretch at 23–167 (ALVVYGSETG…TFIPWLAGFR (145 aa)) folds into the Flavodoxin-like domain. FMN contacts are provided by residues 29–34 (SETGNA), 76–79 (STTG), and 114–123 (LGDSSYPKFN). Residues 235-485 (HDSLTATLVQ…QLQRGGLNSS (251 aa)) enclose the FAD-binding FR-type domain. Residues arginine 389, 419-422 (RQFS), and 458-461 (GVCT) contribute to the FAD site. NADP(+) is bound by residues threonine 500, 568-569 (SR), and 574-578 (KVYVQ). FAD is bound at residue tryptophan 654.

The protein belongs to the NADPH-dependent diflavin oxidoreductase NDOR1 family. It in the N-terminal section; belongs to the flavodoxin family. This sequence in the C-terminal section; belongs to the flavoprotein pyridine nucleotide cytochrome reductase family. In terms of assembly, interacts with dre2; as part of the cytosolic iron-sulfur (Fe-S) protein assembly (CIA) machinery. FAD serves as cofactor. It depends on FMN as a cofactor.

The protein localises to the cytoplasm. The protein resides in the mitochondrion. The catalysed reaction is 2 oxidized [2Fe-2S]-[protein] + NADPH = 2 reduced [2Fe-2S]-[protein] + NADP(+) + H(+). NADPH-dependent reductase which is a central component of the cytosolic iron-sulfur (Fe-S) protein assembly (CIA) machinery. Transfers electrons from NADPH via its FAD and FMN prosthetic groups to the [2Fe-2S] cluster of dre2, another key component of the CIA machinery. In turn, this reduced cluster provides electrons for assembly of cytosolic iron-sulfur cluster proteins. Positively controls H(2)O(2)-induced cell death. This Emericella nidulans (strain FGSC A4 / ATCC 38163 / CBS 112.46 / NRRL 194 / M139) (Aspergillus nidulans) protein is NADPH-dependent diflavin oxidoreductase 1.